Consider the following 359-residue polypeptide: Protein Wnt-5a (359 aa).

Positions 1-20 (MATTHLTAALALLCALLQVD) are cleaved as a signal peptide. C83 and C94 are disulfide-bonded. 2 N-linked (GlcNAc...) asparagine glycosylation sites follow: N93 and N99. 10 cysteine pairs are disulfide-bonded: C133/C141, C143/C161, C217/C231, C219/C226, C288/C319, C304/C314, C318/C358, C334/C349, C336/C346, and C341/C342. A lipid anchor (O-palmitoleoyl serine; by PORCN) is attached at S223. 2 N-linked (GlcNAc...) asparagine glycosylation sites follow: N291 and N305.

It belongs to the Wnt family. In terms of processing, palmitoleoylation is required for efficient binding to frizzled receptors. Depalmitoleoylation leads to Wnt signaling pathway inhibition. In terms of tissue distribution, neuroectodermal and non-neuroectodermal tissues.

It is found in the secreted. It localises to the extracellular space. Its subcellular location is the extracellular matrix. Functionally, ligand for members of the frizzled family of seven transmembrane receptors. Can activate or inhibit canonical Wnt signaling, depending on receptor context. Required during embryogenesis for extension of the primary anterior-posterior axis. The protein is Protein Wnt-5a (WNT-5A) of Ambystoma mexicanum (Axolotl).